The sequence spans 113 residues: MMSRTESRYSSQRTWLLSMVVLAALWSISVQRATARVINDDCPNLIGNRDLYKRVEWICEDCSNIFRNTGMATLCRKNCFFNEDFLWCVYATERTEEMSQLRQWVGILGAGRE.

Residues 1–35 (MMSRTESRYSSQRTWLLSMVVLAALWSISVQRATA) form the signal peptide. 3 disulfides stabilise this stretch: Cys42/Cys79, Cys59/Cys75, and Cys62/Cys88.

This sequence belongs to the arthropod CHH/MIH/GIH/VIH hormone family.

The protein localises to the secreted. Its function is as follows. Inhibits Y-organs where molting hormone (ecdysteroid) is secreted. A molting cycle is initiated when MIH secretion diminishes or stops. The polypeptide is Molt-inhibiting hormone (Metacarcinus magister (Dungeness crab)).